The chain runs to 239 residues: Ribosomal RNA small subunit methyltransferase G (239 aa).

S-adenosyl-L-methionine is bound by residues G77, F82, 128-129 (AE), and R147.

Belongs to the methyltransferase superfamily. RNA methyltransferase RsmG family.

The protein resides in the cytoplasm. Specifically methylates the N7 position of guanine in position 535 of 16S rRNA. The sequence is that of Ribosomal RNA small subunit methyltransferase G from Bacillus anthracis (strain A0248).